The primary structure comprises 140 residues: Endoribonuclease YbeY (140 aa).

3 residues coordinate Zn(2+): His100, His104, and His110.

This sequence belongs to the endoribonuclease YbeY family. Zn(2+) is required as a cofactor.

The protein localises to the cytoplasm. Single strand-specific metallo-endoribonuclease involved in late-stage 70S ribosome quality control and in maturation of the 3' terminus of the 16S rRNA. The polypeptide is Endoribonuclease YbeY (Helicobacter pylori (strain ATCC 700392 / 26695) (Campylobacter pylori)).